The chain runs to 1181 residues: Sodium/potassium/calcium exchanger 1 (1181 aa).

The Extracellular portion of the chain corresponds to 1 to 419 (MGKLIRMGTQ…DLFSVEDRRQ (419 aa)). Disordered stretches follow at residues 107–232 (AMED…TSLK), 255–276 (SLVG…STTP), and 300–323 (STPA…GTST). Positions 124–136 (SLKNNYSPTTAGT) are enriched in polar residues. N-linked (GlcNAc...) asparagine glycosylation is present at asparagine 271. Polar residues predominate over residues 301–311 (TPATTEGSTAA). Residues 420 to 440 (GWVVLHIFGMTYVFVALAIVC) form a helical membrane-spanning segment. At 441-464 (DEYFVPALGVITDKLQISEDVAGA) the chain is on the cytoplasmic side. One copy of the Alpha-1 repeat lies at 461 to 501 (VAGATFMAAGGSAPELFTSLIGVFISHSNVGIGTIVGSAVF). The chain crosses the membrane as a helical span at residues 465-485 (TFMAAGGSAPELFTSLIGVFI). The Extracellular portion of the chain corresponds to 486–491 (SHSNVG). Residues 492–512 (IGTIVGSAVFNILFVIGTCAL) traverse the membrane as a helical segment. Residues 513–519 (FSREILN) lie on the Cytoplasmic side of the membrane. Residues 520-544 (LTWWPLFRDVSFYILDLSMLIVFFL) traverse the membrane as a helical segment. Over 545–552 (DSLIAWWE) the chain is Extracellular. A helical transmembrane segment spans residues 553-569 (SLLLLLAYALYVFTMKW). The Cytoplasmic portion of the chain corresponds to 570–989 (NKQIERWVKE…SLEWPESRQK (420 aa)). The segment at 598–617 (PSDGAIEENEQQDNKKLKLP) is disordered. A Phosphoserine modification is found at serine 625. The interval 650–983 (GEARPSKDKQ…ESEEPLSLEW (334 aa)) is disordered. At threonine 690 the chain carries Phosphothreonine. Positions 701–715 (GDQEEDPGCQEDVDE) are enriched in acidic residues. 14 tandem repeats follow at residues 730–741 (ETEAEGKKDEEG), 742–754 (ETEA…GQEE), 755–766 (ETETKGKEKQEG), 767–778 (ETESEGKDEQEG), 779–791 (ETEA…DHEG), 792–804 (ETEA…EHEG), 805–817 (ETEA…EQEG), 818–830 (ETEA…EQEG), 831–843 (ETEA…EHEV), 844–856 (ETEA…NHEG), 857–869 (ETEA…DHEG), 870–881 (ETEAEGNVEHQG), 882–893 (ETEAEGKVEHEG), and 894–905 (ETEAGEKDEHEG). 3 stretches are compositionally biased toward basic and acidic residues: residues 730-750 (ETEA…RKED), 757-775 (ETKG…GKDE), and 782-805 (AEGK…HEGE). The interval 730-905 (ETEAEGKKDE…EAGEKDEHEG (176 aa)) is 14 X approximate tandem repeats. Positions 806 to 820 (TEAEGTEDEQEGETE) are enriched in acidic residues. The segment covering 834 to 906 (AEGKEVEHEV…AGEKDEHEGQ (73 aa)) has biased composition (basic and acidic residues). Composition is skewed to acidic residues over residues 921–931 (GEAEANAEDQC) and 949–979 (GDSE…EEPL). Residues 990 to 1010 (QAIYLFLLPIVFPLWLTIPDV) traverse the membrane as a helical segment. Residues 1011-1017 (RRQEARK) are Extracellular-facing. The helical transmembrane segment at 1018–1038 (FFVITFLGSIIWIAMFSYLMV) threads the bilayer. Topologically, residues 1039–1053 (WWAHQVGETIGISEE) are cytoplasmic. The chain crosses the membrane as a helical span at residues 1054–1074 (IMGLTILAAGTSIPDLITSVI). The Alpha-2 repeat unit spans residues 1061-1092 (AAGTSIPDLITSVIVARKGLGDMAVSSSVGSN). Residues 1075–1092 (VARKGLGDMAVSSSVGSN) are Extracellular-facing. The helical transmembrane segment at 1093–1113 (IFDITVGLPVPWLLFSLINAL) threads the bilayer. The Cytoplasmic portion of the chain corresponds to 1114-1121 (QPIPVSSN). Residues 1122–1142 (GLFCAIVLLFLMLLFVIFSIA) traverse the membrane as a helical segment. The Extracellular segment spans residues 1143–1150 (SCKWRMNK). Residues 1151 to 1171 (ILGFTMFLLYFVFLVISVMLE) form a helical membrane-spanning segment. Over 1172-1181 (DRIISCPVSV) the chain is Cytoplasmic.

This sequence belongs to the Ca(2+):cation antiporter (CaCA) (TC 2.A.19) family. SLC24A subfamily. The uncleaved signal sequence is required for efficient membrane targeting and proper membrane integration and topology. In terms of tissue distribution, highly expressed in the eye.

The protein localises to the cell membrane. The catalysed reaction is Ca(2+)(out) + K(+)(out) + 4 Na(+)(in) = Ca(2+)(in) + K(+)(in) + 4 Na(+)(out). Functionally, calcium, potassium:sodium antiporter that transports 1 Ca(2+) and 1 K(+) in exchange for 4 Na(+). Critical component of the visual transduction cascade, controlling the calcium concentration of outer segments during light and darkness. Light causes a rapid lowering of cytosolic free calcium in the outer segment of both retinal rod and cone photoreceptors and the light-induced lowering of calcium is caused by extrusion via this protein which plays a key role in the process of light adaptation. This chain is Sodium/potassium/calcium exchanger 1 (Slc24a1), found in Rattus norvegicus (Rat).